A 188-amino-acid polypeptide reads, in one-letter code: MELVNITCLGLGLAADAFAVSLSSGFVIQRIKFNKALKIALFFGIFQAIMPLIGWLTGLSFREFMTNIDHWIAFILLLGIGSKMIYEAYKEMDDDDKFNPLDTYTLLALAIATSIDALAAGLGLSLLKTSILLPCTLIGLITFVLSFIGVFIGHKFGSIFNKKIEIIGGLTLIIIGSKILIEDLIKPI.

The next 6 membrane-spanning stretches (helical) occupy residues 8–28 (CLGL…GFVI), 39–59 (IALF…LTGL), 68–88 (IDHW…IYEA), 106–126 (LLAL…GLSL), 131–151 (ILLP…IGVF), and 164–184 (IEII…IEDL).

Belongs to the MntP (TC 9.B.29) family.

The protein localises to the cell inner membrane. Probably functions as a manganese efflux pump. This chain is Putative manganese efflux pump MntP, found in Crocosphaera subtropica (strain ATCC 51142 / BH68) (Cyanothece sp. (strain ATCC 51142)).